A 141-amino-acid chain; its full sequence is Ribonuclease P protein component (141 aa).

This sequence belongs to the RnpA family. In terms of assembly, consists of a catalytic RNA component (M1 or rnpB) and a protein subunit.

The enzyme catalyses Endonucleolytic cleavage of RNA, removing 5'-extranucleotides from tRNA precursor.. In terms of biological role, RNaseP catalyzes the removal of the 5'-leader sequence from pre-tRNA to produce the mature 5'-terminus. It can also cleave other RNA substrates such as 4.5S RNA. The protein component plays an auxiliary but essential role in vivo by binding to the 5'-leader sequence and broadening the substrate specificity of the ribozyme. In Onion yellows phytoplasma (strain OY-M), this protein is Ribonuclease P protein component.